A 213-amino-acid polypeptide reads, in one-letter code: FMN-dependent NADH:quinone oxidoreductase (213 aa).

Serine 10 contributes to the FMN binding site.

The protein belongs to the azoreductase type 1 family. Homodimer. It depends on FMN as a cofactor.

It carries out the reaction 2 a quinone + NADH + H(+) = 2 a 1,4-benzosemiquinone + NAD(+). The enzyme catalyses N,N-dimethyl-1,4-phenylenediamine + anthranilate + 2 NAD(+) = 2-(4-dimethylaminophenyl)diazenylbenzoate + 2 NADH + 2 H(+). In terms of biological role, quinone reductase that provides resistance to thiol-specific stress caused by electrophilic quinones. Also exhibits azoreductase activity. Catalyzes the reductive cleavage of the azo bond in aromatic azo compounds to the corresponding amines. This Opitutus terrae (strain DSM 11246 / JCM 15787 / PB90-1) protein is FMN-dependent NADH:quinone oxidoreductase.